Reading from the N-terminus, the 312-residue chain is Bifunctional pinoresinol-lariciresinol reductase 1 (312 aa).

Residues 10–16 (GGTGYIG), R35, and K44 each bind NADP(+). K136 acts as the Proton acceptor in catalysis. R140 contacts NADP(+). H268 lines the substrate pocket.

It belongs to the NmrA-type oxidoreductase family. Isoflavone reductase subfamily. As to quaternary structure, dimer. As to expression, expressed in seeds and roots, but not in stems. Detected in leaves.

It carries out the reaction (-)-lariciresinol + NADP(+) = (-)-pinoresinol + NADPH + H(+). The enzyme catalyses (+)-secoisolariciresinol + NADP(+) = (-)-lariciresinol + NADPH + H(+). Its function is as follows. Reductase involved in lignan biosynthesis. Catalyzes the enantioselective conversion of (-)-pinoresinol into (-)-lariciresinol and of (-)-lariciresinol into (+)-secoisolariciresinol. Abstracts the 4R-hydride from the NADPH cofactor during catalysis. This Linum usitatissimum (Flax) protein is Bifunctional pinoresinol-lariciresinol reductase 1 (PLR_Lu1).